A 492-amino-acid polypeptide reads, in one-letter code: RNase aCSPSF2 (492 aa).

Histidine 130, histidine 132, aspartate 134, histidine 135, histidine 213, aspartate 234, and histidine 460 together coordinate a divalent metal cation.

It belongs to the metallo-beta-lactamase superfamily. RNA-metabolizing metallo-beta-lactamase-like family. It depends on Mg(2+) as a cofactor.

In terms of biological role, a 5'-3' exoribonuclease, more active on 5'-monophosphorylated and 5'-hydroxylated RNA than 5'-tri-phosphorylated RNA; note there is no evidence for accumulation of 5'-monophosphorylated RNA in this organism. Translation initiation factor 2 subunit gamma but not subunit alpha protects 5'-tri-phosphorylated RNA from degradation by this enzyme. The polypeptide is RNase aCSPSF2 (Saccharolobus solfataricus (strain ATCC 35092 / DSM 1617 / JCM 11322 / P2) (Sulfolobus solfataricus)).